The following is a 295-amino-acid chain: MSGIISVMTQSLILSIMALGVYITYKILDFPDMSADGSYTMGASIVAFSLTNGISPVVATLMAILCGCTAGLVTGILHIKFKISNLLSGILVMGMLYSINLRIMGKSNIPLFSFKHLFNGEISPIVLALAFVFICKILLDLFLKTGLGYTLKGVGDNSQMIKSLGINIGSIKILGLMISNGLIALSGSLMAQFLGFSDVNMGIGTLVLGIASIIIGITLFKKFTFIKDTTAIIVGSFIYQFTIYFAMSLGMLSTDLKLITAIVIIAFLATGNLNISLKKTNAKLVPKINQKKEVL.

Transmembrane regions (helical) follow at residues 3-23, 57-77, 81-101, 122-142, 173-193, 200-220, 232-252, and 256-276; these read GIIS…GVYI, VVAT…TGIL, FKIS…SINL, ISPI…LDLF, ILGL…MAQF, NMGI…ITLF, IIVG…LGML, and LKLI…LNIS.

This sequence belongs to the binding-protein-dependent transport system permease family. As to quaternary structure, the complex is probably composed of two ATP-binding proteins (CDR20291_0806), two transmembrane proteins (CDR20291_0807) and a solute-binding protein (CDR20291_0805).

The protein localises to the cell membrane. Probably part of an ABC transporter complex involved in tyrosine uptake. May also import phenylalanine. Probably responsible for the translocation of the substrate across the membrane. The sequence is that of Tyrosine transport system permease protein from Clostridioides difficile (strain R20291) (Peptoclostridium difficile).